The sequence spans 315 residues: ATP synthase gamma chain (315 aa).

It belongs to the ATPase gamma chain family. F-type ATPases have 2 components, CF(1) - the catalytic core - and CF(0) - the membrane proton channel. CF(1) has five subunits: alpha(3), beta(3), gamma(1), delta(1), epsilon(1). CF(0) has three main subunits: a, b and c.

The protein resides in the cellular thylakoid membrane. Produces ATP from ADP in the presence of a proton gradient across the membrane. The gamma chain is believed to be important in regulating ATPase activity and the flow of protons through the CF(0) complex. The polypeptide is ATP synthase gamma chain (Trichormus variabilis (strain ATCC 29413 / PCC 7937) (Anabaena variabilis)).